Consider the following 93-residue polypeptide: Aspartyl/glutamyl-tRNA(Asn/Gln) amidotransferase subunit C (93 aa).

This sequence belongs to the GatC family. Heterotrimer of A, B and C subunits.

It carries out the reaction L-glutamyl-tRNA(Gln) + L-glutamine + ATP + H2O = L-glutaminyl-tRNA(Gln) + L-glutamate + ADP + phosphate + H(+). The catalysed reaction is L-aspartyl-tRNA(Asn) + L-glutamine + ATP + H2O = L-asparaginyl-tRNA(Asn) + L-glutamate + ADP + phosphate + 2 H(+). Allows the formation of correctly charged Asn-tRNA(Asn) or Gln-tRNA(Gln) through the transamidation of misacylated Asp-tRNA(Asn) or Glu-tRNA(Gln) in organisms which lack either or both of asparaginyl-tRNA or glutaminyl-tRNA synthetases. The reaction takes place in the presence of glutamine and ATP through an activated phospho-Asp-tRNA(Asn) or phospho-Glu-tRNA(Gln). This chain is Aspartyl/glutamyl-tRNA(Asn/Gln) amidotransferase subunit C, found in Rubrobacter xylanophilus (strain DSM 9941 / JCM 11954 / NBRC 16129 / PRD-1).